Here is a 417-residue protein sequence, read N- to C-terminus: Putative F-box protein At3g58950 (417 aa).

One can recognise an F-box domain in the interval M1 to E53.

The chain is Putative F-box protein At3g58950 from Arabidopsis thaliana (Mouse-ear cress).